A 360-amino-acid polypeptide reads, in one-letter code: Lipid-A-disaccharide synthase (360 aa).

Belongs to the LpxB family.

It carries out the reaction a lipid X + a UDP-2-N,3-O-bis[(3R)-3-hydroxyacyl]-alpha-D-glucosamine = a lipid A disaccharide + UDP + H(+). It functions in the pathway bacterial outer membrane biogenesis; LPS lipid A biosynthesis. Its function is as follows. Condensation of UDP-2,3-diacylglucosamine and 2,3-diacylglucosamine-1-phosphate to form lipid A disaccharide, a precursor of lipid A, a phosphorylated glycolipid that anchors the lipopolysaccharide to the outer membrane of the cell. The chain is Lipid-A-disaccharide synthase from Helicobacter acinonychis (strain Sheeba).